The sequence spans 379 residues: Acetylornithine aminotransferase (379 aa).

Pyridoxal 5'-phosphate is bound by residues 93–94 (GA) and Phe-120. A N(2)-acetyl-L-ornithine-binding site is contributed by Arg-123. A pyridoxal 5'-phosphate-binding site is contributed by 205-208 (DEVQ). Lys-234 is modified (N6-(pyridoxal phosphate)lysine). Ser-262 contacts N(2)-acetyl-L-ornithine. Position 263 (Thr-263) interacts with pyridoxal 5'-phosphate.

Belongs to the class-III pyridoxal-phosphate-dependent aminotransferase family. ArgD subfamily. Homodimer. Pyridoxal 5'-phosphate is required as a cofactor.

The protein resides in the cytoplasm. The catalysed reaction is N(2)-acetyl-L-ornithine + 2-oxoglutarate = N-acetyl-L-glutamate 5-semialdehyde + L-glutamate. It functions in the pathway amino-acid biosynthesis; L-arginine biosynthesis; N(2)-acetyl-L-ornithine from L-glutamate: step 4/4. This Streptococcus mutans serotype c (strain ATCC 700610 / UA159) protein is Acetylornithine aminotransferase.